A 273-amino-acid polypeptide reads, in one-letter code: MTKDIMDAVFIKEMAKTTSNLYRLGWDERNGGNITYLLDEKEVAEYLDVKQIIRTIPMDFDGKKLAGKYFLVTGSGKYFKNVEEAPAVNLGVIQVSEDGKAVHLLWGYTDGGLPTSELPAHFMSHIARLSVDPENRVVMHCHATHLLAMTFTHELTERAFTRTLWQMCTECLVVFPEGVGIIPWLVPGTNEIGEATSEKMKENRLIVWPHHGIYGAGQSMDETFGLIETAEKAAEVYTIVMSQGGIKQAITDEQLKALGERFGVEAKAGYLNN.

E117 is an active-site residue. Residues H140, H142, and H211 each coordinate Zn(2+).

This sequence belongs to the aldolase class II family. RhaD subfamily. Requires Zn(2+) as cofactor.

Its subcellular location is the cytoplasm. It catalyses the reaction L-rhamnulose 1-phosphate = (S)-lactaldehyde + dihydroxyacetone phosphate. Its pathway is carbohydrate degradation; L-rhamnose degradation; glycerone phosphate from L-rhamnose: step 3/3. In terms of biological role, catalyzes the reversible cleavage of L-rhamnulose-1-phosphate to dihydroxyacetone phosphate (DHAP) and L-lactaldehyde. The protein is Rhamnulose-1-phosphate aldolase of Listeria monocytogenes serovar 1/2a (strain ATCC BAA-679 / EGD-e).